Here is a 519-residue protein sequence, read N- to C-terminus: NAD-dependent histone deacetylase SIR2 (519 aa).

Positions 154 to 212 are disordered; it reads EIDENDNKNDGTNNSDIDSDIDSNSDMDSQSESGELDDAMDVDDSLSENEDEYDQDMST. Acidic residues predominate over residues 187 to 208; the sequence is GELDDAMDVDDSLSENEDEYDQ. Residues 221–486 form the Deacetylase sirtuin-type domain; it reads MTPFKYKLPD…SYLCKCLKWD (266 aa). NAD(+) contacts are provided by residues 246-265 and 328-331; these read GAGI…KGLY and QNID. Residue histidine 348 is the Proton acceptor of the active site. The Zn(2+) site is built by cysteine 356, cysteine 359, cysteine 380, and cysteine 383. NAD(+) contacts are provided by residues 430–432, 455–457, and cysteine 472; these read GTS and NKD.

It belongs to the sirtuin family. Class I subfamily. As to quaternary structure, interacts with HXK1. Zn(2+) serves as cofactor.

It is found in the nucleus. It carries out the reaction N(6)-acetyl-L-lysyl-[protein] + NAD(+) + H2O = 2''-O-acetyl-ADP-D-ribose + nicotinamide + L-lysyl-[protein]. Its function is as follows. NAD-dependent deacetylase. Heterochromatin component that silences transcription at silent mating loci, telomeres and the ribosomal DNA, and that also suppresses recombination in the rDNA and extends replicative life span. It acts as a NAD-dependent histone deacetylase, which deacetylates 'Lys-9' and 'Lys-14' of Histone H3 and 'Lys-16' of Histone H4. Functions in the distribution of oxidatively damaged proteins during cell division. Mediates phenotypic switching. The sequence is that of NAD-dependent histone deacetylase SIR2 from Candida albicans (strain SC5314 / ATCC MYA-2876) (Yeast).